We begin with the raw amino-acid sequence, 609 residues long: UvrABC system protein C (609 aa).

Residues S15–V93 enclose the GIY-YIG domain. The region spanning Q202–V237 is the UVR domain.

The protein belongs to the UvrC family. Interacts with UvrB in an incision complex.

Its subcellular location is the cytoplasm. Its function is as follows. The UvrABC repair system catalyzes the recognition and processing of DNA lesions. UvrC both incises the 5' and 3' sides of the lesion. The N-terminal half is responsible for the 3' incision and the C-terminal half is responsible for the 5' incision. This chain is UvrABC system protein C, found in Shewanella denitrificans (strain OS217 / ATCC BAA-1090 / DSM 15013).